The chain runs to 648 residues: Transmembrane 9 superfamily member 8 (648 aa).

Positions 1–33 are cleaved as a signal peptide; it reads MAMEFLRSSRRILESSGCAIALIFLLFIHGAHS. Topologically, residues 34–285 are lumenal; sequence FYLPGVAPQD…YLLMSDNQIH (252 aa). The helical transmembrane segment at 286 to 306 threads the bilayer; sequence WFSIVNSLMIVLFLSGMVAMI. At 307 to 355 the chain is on the cytoplasmic side; it reads MLRTLYRDISRYNELETQEEAQEETGWKLVHGDVFRLPTNSDLLCVYVG. A helical membrane pass occupies residues 356-376; that stretch reads TGVQCLGMVFVTMIFAMLGFL. Over 377 to 381 the chain is Lumenal; that stretch reads SPSNR. A helical transmembrane segment spans residues 382–402; sequence GGLMTAMLLLWVFMGLFAGYA. The Cytoplasmic segment spans residues 403 to 422; sequence SSRLYKMFKGTEWKRIAFRT. Residues 423-443 traverse the membrane as a helical segment; the sequence is AFLFPAVVSAIFFVLNALIWG. Residues 444 to 455 lie on the Lumenal side of the membrane; it reads QKSSGAVPFGTM. Residues 456-476 form a helical membrane-spanning segment; that stretch reads FALIFLWFGISVPLVFVGGYI. Residues 477-506 are Cytoplasmic-facing; the sequence is GFKKPAADDPVKTNKIPRQIPEQAWYMNPV. Residues 507-527 traverse the membrane as a helical segment; it reads FSILIGGILPFGAVFIELFFI. The Lumenal segment spans residues 528–538; that stretch reads LTSIWLNQFYY. Residues 539 to 559 form a helical membrane-spanning segment; the sequence is IFGFLFLVFVILIVTCAEITV. At 560–577 the chain is on the cytoplasmic side; sequence VLCYFQLCSEDYLWWWRS. A helical membrane pass occupies residues 578 to 598; it reads YLTSGSSALYLFLYATFYFFT. Residues 599–604 are Lumenal-facing; sequence KLQITK. A helical membrane pass occupies residues 605 to 625; it reads LVSAMLYFGYMLIASYAFFVL. Residues 626-648 lie on the Cytoplasmic side of the membrane; it reads TGTIGFYACLWFTRLIYSSVKID. The Endoplasmic reticulum export signal motif lies at 637-642; sequence FTRLIY. The Golgi retention signal signature appears at 646 to 648; sequence KID.

Belongs to the nonaspanin (TM9SF) (TC 9.A.2) family.

It localises to the endosome membrane. Its subcellular location is the golgi apparatus membrane. The polypeptide is Transmembrane 9 superfamily member 8 (Arabidopsis thaliana (Mouse-ear cress)).